The sequence spans 192 residues: Phosphoheptose isomerase (192 aa).

In terms of domain architecture, SIS spans 37 to 192 (LADSFKAGGK…IQLIEKEMVK (156 aa)). Residue 52-54 (NGG) participates in substrate binding. Zn(2+)-binding residues include His-61 and Glu-65. Substrate-binding positions include Glu-65, 93-94 (ND), 119-121 (STS), Ser-124, and Gln-172. Gln-172 and His-180 together coordinate Zn(2+).

It belongs to the SIS family. GmhA subfamily. In terms of assembly, homotetramer. The cofactor is Zn(2+).

It localises to the cytoplasm. It carries out the reaction 2 D-sedoheptulose 7-phosphate = D-glycero-alpha-D-manno-heptose 7-phosphate + D-glycero-beta-D-manno-heptose 7-phosphate. Its pathway is carbohydrate biosynthesis; D-glycero-D-manno-heptose 7-phosphate biosynthesis; D-glycero-alpha-D-manno-heptose 7-phosphate and D-glycero-beta-D-manno-heptose 7-phosphate from sedoheptulose 7-phosphate: step 1/1. Functionally, catalyzes the isomerization of sedoheptulose 7-phosphate in D-glycero-D-manno-heptose 7-phosphate. The chain is Phosphoheptose isomerase from Shigella dysenteriae serotype 1 (strain Sd197).